Reading from the N-terminus, the 435-residue chain is Indole diterpene prenyltransferase atmD (435 aa).

Residues 81-82 (AY) and Glu-90 contribute to the L-tryptophan site. Arg-103, Lys-190, Arg-261, Lys-263, Tyr-265, Tyr-346, and Tyr-413 together coordinate substrate.

This sequence belongs to the tryptophan dimethylallyltransferase family.

In terms of biological role, indole diterpene prenyltransferase; part of the ATM2 gene cluster that mediates the biosynthesis of aflatrem, a tremorgenic mycotoxin with acute neurotoxic effects. Synthesis of geranylgeranyl diphosphate (GGPP) by AtmG (a GGPP synthase) precedes condensation of GGPP with indole 3-glycerol phosphate, followed by epoxidation and cyclization by AtmM (a FAD-dependent monooxygenase) and AtmC (a prenyltransferase) to produce paspaline. AtmB is also essential for paspaline production, but its exact role has not been identified yet. AtmP, a cytochrome P450 monooxygenase, subsequently converts paspaline to 13-desoxypaxilline via PC-M6 by removal of the C-30 methyl group and oxidation at C-10. AtmQ, a cytochrome P450 monooxygenase, then catalyzes the oxidation of 13-desoxypaxilline, first at C-7 to produce paspalicine and then at C-13 to form paspalinine. Finally, AtmD prenylates paspalinine to form aflatrem. In Aspergillus flavus, this protein is Indole diterpene prenyltransferase atmD.